A 108-amino-acid polypeptide reads, in one-letter code: Immunoglobulin kappa variable 11-125 (108 aa).

The framework-1 stretch occupies residues 1 to 23 (DVQMIQSPSSLSASLGDIVTMTC). Residues cysteine 23 and cysteine 88 are joined by a disulfide bond. Positions 24–34 (QASQGTSINLN) are complementarity-determining-1. The interval 35 to 49 (WFQQKPGKAPKLLIY) is framework-2. Residues 50–56 (GASILED) form a complementarity-determining-2 region. The segment at 57-88 (GVPSRFSGSRYGTDFTLTISSLEDEDMATYFC) is framework-3. Residues 89-97 (LQHSYLPYT) are complementarity-determining-3. Residues 98–108 (FGGGTKLEIKR) are framework-4.

This is Immunoglobulin kappa variable 11-125 from Mus musculus (Mouse).